A 178-amino-acid chain; its full sequence is MRYIKSEPYYEGLPPFNVSGSPFNVVPIHNYPELMKDTCALINAEWPRSETARMRSLEASCDSLPCSLVLTTEGMCRVIAHLKLSPINSKKKACFVESVVVDKRHRGQGFGKLIMKFAEDYCRVVLDLKTIYLSTIDQDGFYERIGYEYCAPITMYGPRHCELPSLQNAKKKYMKKVL.

One can recognise an N-acetyltransferase domain in the interval 26-178 (VPIHNYPELM…AKKKYMKKVL (153 aa)). Substrate contacts are provided by residues Arg-48, 53–56 (RMRS), Asn-88, and Ser-98. Acetyl-CoA-binding positions include 99-101 (VVV) and 107-112 (GQGFGK). Ser-134 is a substrate binding site. Residue Gln-138 participates in acetyl-CoA binding.

Belongs to the acetyltransferase family.

The enzyme catalyses N-terminal L-aspartyl-L-aspartyl-L-aspartyl-[protein] + acetyl-CoA = N-terminal N-acetyl-L-aspartyl-L-aspartyl-L-aspartyl-[protein] + CoA + H(+). It carries out the reaction N-terminal L-glutamyl-L-glutamyl-L-glutamyl-[protein] + acetyl-CoA = N-terminal N-acetyl-L-glutamyl-L-glutamyl-L-glutamyl-[protein] + CoA + H(+). Its function is as follows. N-alpha-acetyltransferase that acetylates the amino terminal acidic residue of proteins devoid of initiator methionine. Preferentially acts on proteins starting with Asp-Asp-Asp and Glu-Glu-Glu sequences. In vitro, shows high activity towards N-terminal sequences starting with Met-Asp-Glu-Leu, Met-Glu-Glu-Glu and Met-Asp-Asp-Asp. This chain is N-alpha-acetyltransferase 80, found in Drosophila melanogaster (Fruit fly).